Here is an 88-residue protein sequence, read N- to C-terminus: MKTVLAFLFLPFIAFTHAESYEDVKEEIKNEAEKEIFEDLEEESDALDSSVREFNDAKPWRFRRAIRRVRWRKVAPYIPFVVKTVGKK.

Positions 1-18 (MKTVLAFLFLPFIAFTHA) are cleaved as a signal peptide. Residues 19-57 (ESYEDVKEEIKNEAEKEIFEDLEEESDALDSSVREFNDA) constitute a propeptide that is removed on maturation. Residue V85 is modified to Valine amide.

It belongs to the arminin family. As to expression, expressed in entodermal epithelium along the body column.

It localises to the secreted. Its subcellular location is the target cell membrane. Functionally, antimicrobial peptide with a broad-spectrum antimicrobial activity. Shows very strong bactericidal activity against B.megaterium (MBC=0.1 uM), E.coli (MBC=0.2 uM), S.aureus (MBC=0.4 uM), methicillin-resistant S.aureus (MRSA) (MBC=0.4-0.8 uM), vancomycin-resistant enterococci (VRE) (E.faecalis (MBC=1.6 uM), and E.faecium (MBC=0.4-0.8 uM)), and extended-spectrum beta-lactamase (ESBL)-producing enterobacteriaceae strains (K.pneumoniae (MBC=0.4-0.8 uM), E.coli (MBC=0.2-0.4 uM)). Keeps its antibacterial activity under a wide range of salt concentrations that mimic physiological conditions of human blood, which is surprising, since Hydra is an obligate freshwater animal with nearly no salt tolerance. Does not affect red blood cells. This Hydra vulgaris (Hydra) protein is Arminin 1a.